A 139-amino-acid polypeptide reads, in one-letter code: Stress-related protein 1 (139 aa).

A compositionally biased stretch (polar residues) spans 1–12; the sequence is MTSESSTPTGST. The segment at 1 to 86 is disordered; that stretch reads MTSESSTPTG…AERPGSATTP (86 aa). Composition is skewed to low complexity over residues 14 to 53 and 60 to 74; these read ALPA…SLVV and SPVV…TRPR. Serine 60 carries the post-translational modification Phosphoserine.

In terms of tissue distribution, embryo.

In terms of biological role, involved in drought, heat, cold, and/or salt tolerance. This Zea mays (Maize) protein is Stress-related protein 1 (SRP1).